The primary structure comprises 173 residues: C-phycocyanin beta subunit (173 aa).

Asparagine 73 carries the post-translational modification N4-methylasparagine. (2R,3E)-phycocyanobilin contacts are provided by cysteine 83 and cysteine 154.

This sequence belongs to the phycobiliprotein family. In terms of assembly, heterodimer of an alpha and a beta subunit, which further assembles into trimers and the trimers into hexamers. Post-translationally, contains two covalently linked bilin chromophores.

It localises to the cellular thylakoid membrane. Functionally, light-harvesting photosynthetic bile pigment-protein from the phycobiliprotein complex (phycobilisome, PBS). Phycocyanin is the major phycobiliprotein in the PBS rod. The chain is C-phycocyanin beta subunit (cpcB1) from Synechococcus elongatus (strain ATCC 33912 / PCC 7942 / FACHB-805) (Anacystis nidulans R2).